Here is a 139-residue protein sequence, read N- to C-terminus: Phosphoribosyl-AMP cyclohydrolase (139 aa).

Asp-95 provides a ligand contact to Mg(2+). Cys-96 contacts Zn(2+). Mg(2+)-binding residues include Asp-97 and Asp-99. Positions 114 and 121 each coordinate Zn(2+).

This sequence belongs to the PRA-CH family. Homodimer. It depends on Mg(2+) as a cofactor. Zn(2+) is required as a cofactor.

It localises to the cytoplasm. It carries out the reaction 1-(5-phospho-beta-D-ribosyl)-5'-AMP + H2O = 1-(5-phospho-beta-D-ribosyl)-5-[(5-phospho-beta-D-ribosylamino)methylideneamino]imidazole-4-carboxamide. Its pathway is amino-acid biosynthesis; L-histidine biosynthesis; L-histidine from 5-phospho-alpha-D-ribose 1-diphosphate: step 3/9. Functionally, catalyzes the hydrolysis of the adenine ring of phosphoribosyl-AMP. This is Phosphoribosyl-AMP cyclohydrolase from Chelativorans sp. (strain BNC1).